The primary structure comprises 197 residues: Beta-crystallin A2 (197 aa).

The tract at residues 1–11 is N-terminal arm; the sequence is MSSAPAPGSAP. Beta/gamma crystallin 'Greek key' domains follow at residues 12–52 and 53–99; these read VCLT…KVEN and GAWV…RPVL. Residues 100–105 form a connecting peptide region; sequence CANHSD. 2 consecutive Beta/gamma crystallin 'Greek key' domains span residues 106 to 147 and 148 to 196; these read SRVT…KVSS and GAWV…RRVQ.

Belongs to the beta/gamma-crystallin family. As to quaternary structure, homo/heterodimer, or complexes of higher-order. The structure of beta-crystallin oligomers seems to be stabilized through interactions between the N-terminal arms.

Functionally, crystallins are the dominant structural components of the vertebrate eye lens. This Mus musculus (Mouse) protein is Beta-crystallin A2 (Cryba2).